Reading from the N-terminus, the 690-residue chain is Calpain-9 (690 aa).

Residues 1 to 24 (MPYLYRAPGPQAHPVPKDARITHS) are disordered. The region spanning 42 to 337 (LFEDADFPAS…FDKVEICNLT (296 aa)) is the Calpain catalytic domain. Residues Leu-81, Gly-83, and Asp-88 each coordinate Ca(2+). Cys-97 is a catalytic residue. Glu-167 is a Ca(2+) binding site. Catalysis depends on residues His-254 and Asn-278. Ca(2+) is bound by residues Glu-284, Asp-291, Leu-312, Asp-314, and Glu-316. A domain III region spans residues 338–521 (PDALEEDAIH…PPDQETEEEQ (184 aa)). Positions 498–519 (GNVDIDLPEPPKPTPPDQETEE) are disordered. EF-hand domains are found at residues 518-552 (EEEQ…VLQK), 561-589 (LSLI…FKVF), and 591-626 (DKLK…AGFQ). The interval 522-690 (RFRALFEQVA…NEFIHLTMNI (169 aa)) is domain IV. Ca(2+) is bound by residues Asp-574, Ser-576, Asn-578, Lys-580, Glu-585, Asp-604, Asp-606, Ser-608, Thr-610, and Glu-615.

Belongs to the peptidase C2 family. In terms of tissue distribution, expressed predominantly in stomach.

Functionally, calcium-regulated non-lysosomal thiol-protease. The protein is Calpain-9 (CAPN9) of Homo sapiens (Human).